The following is a 536-amino-acid chain: Membrane protein insertase YidC (536 aa).

The chain crosses the membrane as a helical span at residues 5–25; it reads ALIAVILSIVFFYGYSALFPP. Residues 30-54 are disordered; that stretch reads APAPSAQQAVTGSQPGAPQASVAAV. The segment covering 31–54 has biased composition (low complexity); it reads PAPSAQQAVTGSQPGAPQASVAAV. The next 4 helical transmembrane spans lie at 350–370, 420–440, 454–474, and 494–514; these read YGIAIIIITVILKIIFYPLTH, LPMLVQIPVFFALYKALMFSI, LAGKDPYYVTPIIMGITMVIQ, and PVVFTFMFLNFPSGLVLYWLV.

It belongs to the OXA1/ALB3/YidC family. Type 1 subfamily. As to quaternary structure, interacts with the Sec translocase complex via SecD. Specifically interacts with transmembrane segments of nascent integral membrane proteins during membrane integration.

It localises to the cell inner membrane. Its function is as follows. Required for the insertion and/or proper folding and/or complex formation of integral membrane proteins into the membrane. Involved in integration of membrane proteins that insert both dependently and independently of the Sec translocase complex, as well as at least some lipoproteins. Aids folding of multispanning membrane proteins. This Geobacter metallireducens (strain ATCC 53774 / DSM 7210 / GS-15) protein is Membrane protein insertase YidC.